The chain runs to 357 residues: Histidinol-phosphate aminotransferase 2 (357 aa).

Lys216 bears the N6-(pyridoxal phosphate)lysine mark.

It belongs to the class-II pyridoxal-phosphate-dependent aminotransferase family. Histidinol-phosphate aminotransferase subfamily. As to quaternary structure, homodimer. Pyridoxal 5'-phosphate serves as cofactor.

It carries out the reaction L-histidinol phosphate + 2-oxoglutarate = 3-(imidazol-4-yl)-2-oxopropyl phosphate + L-glutamate. It participates in amino-acid biosynthesis; L-histidine biosynthesis; L-histidine from 5-phospho-alpha-D-ribose 1-diphosphate: step 7/9. This chain is Histidinol-phosphate aminotransferase 2, found in Idiomarina loihiensis (strain ATCC BAA-735 / DSM 15497 / L2-TR).